Reading from the N-terminus, the 71-residue chain is Putative membrane protein insertion efficiency factor (71 aa).

It belongs to the UPF0161 family.

Its subcellular location is the cell membrane. Could be involved in insertion of integral membrane proteins into the membrane. In Acetivibrio thermocellus (strain ATCC 27405 / DSM 1237 / JCM 9322 / NBRC 103400 / NCIMB 10682 / NRRL B-4536 / VPI 7372) (Clostridium thermocellum), this protein is Putative membrane protein insertion efficiency factor.